The primary structure comprises 95 residues: Histone-like DNA-binding protein (95 aa).

The protein belongs to the bacterial histone-like protein family.

The polypeptide is Histone-like DNA-binding protein (Rickettsia conorii (strain ATCC VR-613 / Malish 7)).